Reading from the N-terminus, the 384-residue chain is Putative RNA methyltransferase slr0064 (384 aa).

One can recognise a THUMP domain in the interval 53-164; it reads LLYRINLWSR…QNHCQLSLDS (112 aa).

This sequence belongs to the methyltransferase superfamily.

The chain is Putative RNA methyltransferase slr0064 from Synechocystis sp. (strain ATCC 27184 / PCC 6803 / Kazusa).